A 356-amino-acid polypeptide reads, in one-letter code: Pavine N-methyltransferase (356 aa).

Phe96, Ser97, Gly135, Asn159, Gln163, Asp185, Val186, and Val201 together coordinate S-adenosyl-L-homocysteine. Positions 96, 97, 135, 159, 163, 185, 186, and 201 each coordinate S-adenosyl-L-methionine. Residue Glu205 participates in (S)-tetrahydropapaverine binding. Cys331 is a catalytic residue.

The protein belongs to the CFA/CMAS family. Homodimer.

The protein localises to the cytoplasm. It carries out the reaction (+-)-pavine + S-adenosyl-L-methionine = N-methylpavine + S-adenosyl-L-homocysteine + H(+). It catalyses the reaction (S)-reticuline + S-adenosyl-L-methionine = (S)-tembetarine + S-adenosyl-L-homocysteine + H(+). The enzyme catalyses (S)-stylopine + S-adenosyl-L-methionine = (S)-cis-N-methylstylopine + S-adenosyl-L-homocysteine. The catalysed reaction is (S)-scoulerine + S-adenosyl-L-methionine = (S)-cis-N-methylscoulerine + S-adenosyl-L-homocysteine. It carries out the reaction (S)-tetrahydropapaverine + S-adenosyl-L-methionine = (S)-N-methyltetrahydropapaverine + S-adenosyl-L-homocysteine + H(+). It catalyses the reaction (S)-tetrahydropalmatine + S-adenosyl-L-methionine = (S)-cis-N-methyltetrahydropalmatine + S-adenosyl-L-homocysteine. It functions in the pathway alkaloid biosynthesis. With respect to regulation, in the presence of a racemic mixture of tetrahydropapaverine (THP), one molecule of (S)-THP binds in a productive mode, while one molecule of (R)-THP is bound next to it in a non-productive mode. The (R)-THP seems to inhibit the release of products from the enzyme when higher concentrations of the racemic substrate are added to the reaction. N-methyltransferase with a substrate preference for (+-)-pavine and (S)-reticuline, but also active with the protoberberines scoulerine and stylopine and, to a lesser extent, tetrahydropapaverine (THP) and tetrahydropalmatine. Is not active on (R)-reticuline, cryptopine, glaucine, codeine, canadaline, noscapine and berbamine. In Thalictrum flavum subsp. glaucum (Yellow meadow rue), this protein is Pavine N-methyltransferase.